A 359-amino-acid chain; its full sequence is Probable F-box protein At3g61730 (359 aa).

2 stretches are compositionally biased toward basic and acidic residues: residues 1–14 (MKTRSSDAEGDSRG) and 37–48 (QKNDIQREEDGR). The segment at 1–60 (MKTRSSDAEGDSRGKMIAPVGEGNGGRKRKLVQSNEQKNDIQREEDGRAKRRIVQSSDQK) is disordered. Residues 82–128 (QSRFSWYEQDIWTYISRFLDGKSLVKLGATNKWFYKIAMEDTVWRFA) enclose the F-box; degenerate domain.

In terms of assembly, interacts with SKP1A. In terms of tissue distribution, expressed in flower buds, developing anthers, pollen grains, siliques, rosette leaves and roots. Detected at lower levels in open flowers, stems and cauline leaves. Expressed in young seedling in the hydathodes, shoot apical meristem, root tips and lateral root primordia.

The protein localises to the nucleus. In terms of biological role, regulates tapetum degeneration and pollen maturation during anther development. The protein is Probable F-box protein At3g61730 (RMF) of Arabidopsis thaliana (Mouse-ear cress).